A 384-amino-acid polypeptide reads, in one-letter code: Actin-related protein 2/3 complex subunit 1 (384 aa).

WD repeat units lie at residues 61 to 99 (DHDK…TYKP), 105 to 146 (RINR…WVSK), 151 to 190 (PIKS…LDSK), 212 to 251 (YQGS…QSVN), and 349 to 383 (AHEN…VIYT).

The protein belongs to the WD repeat ARPC1 family. Component of the Arp2/3 complex composed of ARP2, ARP3, ARC40/p41-ARC, ARC35/p34-ARC, ARC18/p21-ARC, ARC19/p20-ARC and ARC16/p16-ARC.

It is found in the cytoplasm. It localises to the cytoskeleton. The protein resides in the actin patch. In terms of biological role, functions as a component of the Arp2/3 complex which is involved in regulation of actin polymerization and together with an activating nucleation-promoting factor (NPF) mediates the formation of branched actin networks. The polypeptide is Actin-related protein 2/3 complex subunit 1 (ARC40) (Saccharomyces cerevisiae (strain ATCC 204508 / S288c) (Baker's yeast)).